Consider the following 438-residue polypeptide: UDP-N-acetylmuramoylalanine--D-glutamate ligase (438 aa).

112–118 (GSNGKST) contacts ATP.

It belongs to the MurCDEF family.

Its subcellular location is the cytoplasm. It catalyses the reaction UDP-N-acetyl-alpha-D-muramoyl-L-alanine + D-glutamate + ATP = UDP-N-acetyl-alpha-D-muramoyl-L-alanyl-D-glutamate + ADP + phosphate + H(+). It functions in the pathway cell wall biogenesis; peptidoglycan biosynthesis. Cell wall formation. Catalyzes the addition of glutamate to the nucleotide precursor UDP-N-acetylmuramoyl-L-alanine (UMA). The polypeptide is UDP-N-acetylmuramoylalanine--D-glutamate ligase (Yersinia pestis bv. Antiqua (strain Antiqua)).